The sequence spans 216 residues: U1 small nuclear ribonucleoprotein C (216 aa).

Residues 4-36 form a Matrin-type zinc finger; that stretch reads FFCDYCDVYLTHDSMSVRKAHNAGRNHLRNVVE. Pro residues-rich tracts occupy residues 68 to 80, 87 to 198, and 206 to 216; these read AMAPPGAFPPPFG, QLPP…PAPP, and PGPPPGLSEKR. The interval 68–216 is disordered; the sequence is AMAPPGAFPP…GPPPGLSEKR (149 aa).

The protein belongs to the U1 small nuclear ribonucleoprotein C family. U1 snRNP is composed of the 7 core Sm proteins B/B', D1, D2, D3, E, F and G that assemble in a heptameric protein ring on the Sm site of the small nuclear RNA to form the core snRNP, and at least 3 U1 snRNP-specific proteins U1-70K, U1-A and U1-C. U1-C interacts with U1 snRNA and the 5' splice-site region of the pre-mRNA.

It is found in the nucleus. Its function is as follows. Component of the spliceosomal U1 snRNP, which is essential for recognition of the pre-mRNA 5' splice-site and the subsequent assembly of the spliceosome. U1-C is directly involved in initial 5' splice-site recognition for both constitutive and regulated alternative splicing. The interaction with the 5' splice-site seems to precede base-pairing between the pre-mRNA and the U1 snRNA. Stimulates commitment or early (E) complex formation by stabilizing the base pairing of the 5' end of the U1 snRNA and the 5' splice-site region. This is U1 small nuclear ribonucleoprotein C from Aspergillus fumigatus (strain ATCC MYA-4609 / CBS 101355 / FGSC A1100 / Af293) (Neosartorya fumigata).